The following is a 198-amino-acid chain: NAD(P)H dehydrogenase (quinone) (198 aa).

Positions 4-190 constitute a Flavodoxin-like domain; that stretch reads ILVLYYSMYG…ILASFQGAHV (187 aa). FMN-binding positions include 10-15 and 79-81; these read SMYGHI and TRF. Residue tyrosine 12 coordinates NAD(+). Tryptophan 99 lines the substrate pocket. Residues 114-119 and histidine 134 each bind FMN; that span reads STGTGG.

This sequence belongs to the WrbA family. The cofactor is FMN.

It catalyses the reaction a quinone + NADH + H(+) = a quinol + NAD(+). The catalysed reaction is a quinone + NADPH + H(+) = a quinol + NADP(+). This chain is NAD(P)H dehydrogenase (quinone), found in Azotobacter vinelandii (strain DJ / ATCC BAA-1303).